Here is a 101-residue protein sequence, read N- to C-terminus: Small ribosomal subunit protein uS14 (101 aa).

It belongs to the universal ribosomal protein uS14 family. In terms of assembly, part of the 30S ribosomal subunit. Contacts proteins S3 and S10.

Its function is as follows. Binds 16S rRNA, required for the assembly of 30S particles and may also be responsible for determining the conformation of the 16S rRNA at the A site. This Haemophilus influenzae (strain 86-028NP) protein is Small ribosomal subunit protein uS14.